The primary structure comprises 400 residues: 3-phenylpropionate/cinnamic acid dioxygenase ferredoxin--NAD(+) reductase component (400 aa).

5–36 (TIIIVGGGQAAAMAAASLRQQGFTGELHLFSD) is a binding site for FAD. An NAD(+)-binding site is contributed by 146 to 174 (SVVIVGAGTIGLELAASATQRRCKVTVIE).

The protein belongs to the bacterial ring-hydroxylating dioxygenase ferredoxin reductase family. In terms of assembly, this dioxygenase system consists of four proteins: the two subunits of the hydroxylase component (HcaE and HcaF), a ferredoxin (HcaC) and a ferredoxin reductase (HcaD). The cofactor is FAD.

The enzyme catalyses 2 reduced [2Fe-2S]-[ferredoxin] + NAD(+) + H(+) = 2 oxidized [2Fe-2S]-[ferredoxin] + NADH. The protein operates within aromatic compound metabolism; 3-phenylpropanoate degradation. Part of the multicomponent 3-phenylpropionate dioxygenase, that converts 3-phenylpropionic acid (PP) and cinnamic acid (CI) into 3-phenylpropionate-dihydrodiol (PP-dihydrodiol) and cinnamic acid-dihydrodiol (CI-dihydrodiol), respectively. The sequence is that of 3-phenylpropionate/cinnamic acid dioxygenase ferredoxin--NAD(+) reductase component from Escherichia coli (strain 55989 / EAEC).